Consider the following 473-residue polypeptide: Azaphilone pigments biosynthesis cluster protein L (473 aa).

A signal peptide spans 1–23; it reads MAELSIASGIVGLLSLGIQVTQS. 2 ANK repeats span residues 403-432 and 436-465; these read EYGN…DVNA and RYGN…NVST. N462 is a glycosylation site (N-linked (GlcNAc...) asparagine).

Functionally, part of the gene cluster that mediates the biosynthesis of azaphilone pigments (MonAzPs), a complex mixture of compounds with a common azaphilone skeleton very widely used as food colorants. Seems not to play a direct role in the biosynthesis but might have a regulatorx function. This is Azaphilone pigments biosynthesis cluster protein L from Monascus ruber (Mold).